Consider the following 417-residue polypeptide: Ribulose bisphosphate carboxylase large chain (417 aa).

N103 and T153 together coordinate substrate. The Proton acceptor role is filled by K155. Residue K157 participates in substrate binding. Residues K181, D183, and E184 each coordinate Mg(2+). K181 is subject to N6-carboxylysine. The Proton acceptor role is filled by H274. Substrate-binding residues include R275, H307, and S359.

It belongs to the RuBisCO large chain family. Type I subfamily. In terms of assembly, heterohexadecamer of 8 large chains and 8 small chains. Mg(2+) serves as cofactor.

It localises to the plastid. It is found in the chloroplast. The catalysed reaction is 2 (2R)-3-phosphoglycerate + 2 H(+) = D-ribulose 1,5-bisphosphate + CO2 + H2O. The enzyme catalyses D-ribulose 1,5-bisphosphate + O2 = 2-phosphoglycolate + (2R)-3-phosphoglycerate + 2 H(+). Functionally, ruBisCO catalyzes two reactions: the carboxylation of D-ribulose 1,5-bisphosphate, the primary event in carbon dioxide fixation, as well as the oxidative fragmentation of the pentose substrate in the photorespiration process. Both reactions occur simultaneously and in competition at the same active site. This is Ribulose bisphosphate carboxylase large chain from Acrostichum aureum (Golden leather fern).